We begin with the raw amino-acid sequence, 216 residues long: Uracil-DNA glycosylase (216 aa).

The active-site Proton acceptor is D59.

This sequence belongs to the uracil-DNA glycosylase (UDG) superfamily. UNG family.

The protein localises to the cytoplasm. It catalyses the reaction Hydrolyzes single-stranded DNA or mismatched double-stranded DNA and polynucleotides, releasing free uracil.. Excises uracil residues from the DNA which can arise as a result of misincorporation of dUMP residues by DNA polymerase or due to deamination of cytosine. This is Uracil-DNA glycosylase from Staphylococcus epidermidis (strain ATCC 12228 / FDA PCI 1200).